The chain runs to 868 residues: Ionotropic receptor 93a (868 aa).

The N-terminal stretch at 1-28 is a signal peptide; the sequence is MNPGEMRPSACLLLLAGLQLSILVPTEA. At 29–565 the chain is on the extracellular side; that stretch reads NDFSSFLSAN…ITRKPDEVSR (537 aa). N-linked (GlcNAc...) asparagine glycosylation is found at Asn-38, Asn-205, Asn-294, Asn-305, Asn-432, Asn-475, Asn-499, and Asn-543. The chain crosses the membrane as a helical span at residues 566–586; that stretch reads IYLFTAPFTVETWFCLMGIIL. The Cytoplasmic portion of the chain corresponds to 587 to 642; that stretch reads LTAPTLYAINRLAPLKEMRIVGLSTVKSCFWYIFGALLQQGGMYLPTADSGRLVVG. Residues 643–663 form a helical membrane-spanning segment; it reads FWWIVVIVLVTTYCGNLVAFL. Topologically, residues 664 to 832 are extracellular; that stretch reads TFPKFQPGVD…HKVNMDDMQG (169 aa). Residue Asn-691 is glycosylated (N-linked (GlcNAc...) asparagine). The helical transmembrane segment at 833-853 threads the bilayer; the sequence is CFLVLLLGFTLALLIVCGEFW. Over 854 to 868 the chain is Cytoplasmic; sequence YRRFRASRKRRQFTN.

The protein belongs to the glutamate-gated ion channel (TC 1.A.10.1) family. In terms of tissue distribution, in the antenna, detected in sacculus neurons which innervate the first and second chambers (at protein level). Expressed in multiple cells of the larval dorsal organ ganglion, including the dorsal organ cool cells where it is predominately localized to the dendritic bulbs (at protein level).

It localises to the cell membrane. Its function is as follows. Integral part of various neural sensory systems in the antenna that provide the neural basis for the response to environmental changes in temperature (thermosensation) and humidity (hygrosensation). Together with Ir21a and Ir25a, mediates the response of the larval dorsal organ cool cells, a trio of cool-responsive neurons, to cooling and is required for cool avoidance behavior. Together with Ir25a and Ir40a, mediates the response of the hydrosensory sacculus neurons to changes in relative humidity, and is required for dry detection and humidiy preference behavior. The protein is Ionotropic receptor 93a of Drosophila melanogaster (Fruit fly).